The primary structure comprises 260 residues: Kallikrein-8 (260 aa).

A signal peptide spans 1 to 28; the sequence is MGRPPPCAIQTWILLFLLMGAWAGLTRA. Positions 29–32 are excised as a propeptide; that stretch reads QGSK. The Peptidase S1 domain maps to 33 to 257; that stretch reads ILEGQECKPH…YTNWIKKTMG (225 aa). Intrachain disulfides connect Cys39/Cys173, Cys58/Cys74, Cys145/Cys246, Cys152/Cys218, Cys184/Cys198, and Cys208/Cys233. The Charge relay system role is filled by His73. An N-linked (GlcNAc...) asparagine glycan is attached at Asn110. Asp120 (charge relay system) is an active-site residue. The active-site Charge relay system is Ser212.

The protein belongs to the peptidase S1 family. Kallikrein subfamily. In terms of assembly, interacts with SPINK9. Restricted to hippocampus.

It is found in the secreted. It localises to the cytoplasm. The enzyme catalyses Cleavage of amide substrates following the basic amino acids Arg or Lys at the P1 position, with a preference for Arg over Lys.. Serine protease which is capable of degrading a number of proteins such as casein, fibrinogen, kininogen, fibronectin and collagen type IV. Also cleaves L1CAM in response to increased neural activity. Induces neurite outgrowth and fasciculation of cultured hippocampal neurons. Plays a role in the formation and maturation of orphan and small synaptic boutons in the Schaffer-collateral pathway, regulates Schaffer-collateral long-term potentiation in the hippocampus and is required for memory acquisition and synaptic plasticity. Involved in skin desquamation and keratinocyte proliferation. Plays a role in the secondary phase of pathogenesis following spinal cord injury. This chain is Kallikrein-8 (Klk8), found in Rattus norvegicus (Rat).